The primary structure comprises 308 residues: HTH-type transcriptional regulator SsuR (308 aa).

Positions 1–59 constitute an HTH lysR-type domain; it reads MNFQQLRFVREAVRQNMNLTEVANVLYTSQSGVSKQIKDLEDELGVDIFIRRGKRLTGL. Residues 19–38 constitute a DNA-binding region (H-T-H motif); it reads LTEVANVLYTSQSGVSKQIK.

This sequence belongs to the LysR transcriptional regulatory family.

Functionally, transcriptional regulator that is essential for the utilization of a number of organic sulfur sources of either environmental or human origin. Required for aliphatic sulfonate utilization. Binds to DNA at target promoter regions. Targets include the ssuDBC operon, the tauABC operon, three tauD-type genes and atsA. The chain is HTH-type transcriptional regulator SsuR from Burkholderia cenocepacia (strain ATCC BAA-245 / DSM 16553 / LMG 16656 / NCTC 13227 / J2315 / CF5610) (Burkholderia cepacia (strain J2315)).